A 302-amino-acid polypeptide reads, in one-letter code: D-alanine--D-alanine ligase B (302 aa).

One can recognise an ATP-grasp domain in the interval 99–294 (KKVLKAENIR…YSKFIDLIIE (196 aa)). 126–181 (IEEIGYPVFVKPNNGGSSVATFKVYKKEDIKNSVMEGLKYDEEVIIESFIKGREIT) provides a ligand contact to ATP. Aspartate 248, glutamate 261, and asparagine 263 together coordinate Mg(2+).

Belongs to the D-alanine--D-alanine ligase family. Mg(2+) is required as a cofactor. The cofactor is Mn(2+).

It is found in the cytoplasm. It carries out the reaction 2 D-alanine + ATP = D-alanyl-D-alanine + ADP + phosphate + H(+). The protein operates within cell wall biogenesis; peptidoglycan biosynthesis. Cell wall formation. The protein is D-alanine--D-alanine ligase B of Clostridium perfringens (strain 13 / Type A).